We begin with the raw amino-acid sequence, 478 residues long: NAD(+) hydrolase ThsA (478 aa).

The 287-residue stretch at 1–287 folds into the Deacetylase sirtuin-type domain; that stretch reads MDKKVLIKRF…SIRKKYLRKT (287 aa). NAD(+)-binding residues include alanine 19, aspartate 110, and histidine 148. Residue histidine 148 is the Proton acceptor of the active site. Residues 288–478 are SLOG (STALD) domain; the sequence is IFISGSAVDY…VSLINSIQED (191 aa). The 3'cADPR site is built by glycine 292, serine 293, leucine 330, arginine 373, lysine 390, glycine 401, and glutamate 405.

The protein belongs to the soluble Thoeris ThsA family. As to quaternary structure, homotetramer in solution.

It carries out the reaction NAD(+) + H2O = ADP-D-ribose + nicotinamide + H(+). With respect to regulation, activated by 3'cADPR. NAD(+) hydrolyzing component (NADase) of the Thoeris antiviral defense system, composed of ThsA and ThsB (maybe AS248_15445). Activated by 3' cyclic ADP-D-ribose (3'cADPR) but not its isomers 2'cADPR, cADPR and very weakly by ADPR; binds 3'cADPR better than 2'cADPR. Upon activation binds and hydrolyzes NAD(+), leading to cell death and inhibition of phage replication. This Enterococcus faecium (Streptococcus faecium) protein is NAD(+) hydrolase ThsA.